Reading from the N-terminus, the 559-residue chain is Alkaline phosphatase PhoK (559 aa).

A signal peptide spans 1 to 19 (MLKHVAAALLLATAMPVVA). Zn(2+) is bound by residues D49 and T89. T89 serves as the catalytic Phosphothreonine intermediate. C90 and C126 form a disulfide bridge. Residues N110 and 171 to 173 (KDR) contribute to the substrate site. A disulfide bridge connects residues C231 and C314. 5 residues coordinate Zn(2+): D300, H304, D345, H346, and H491. The cysteines at positions 545 and 556 are disulfide-linked.

As to quaternary structure, monomer. Requires Zn(2+) as cofactor.

It is found in the secreted. The catalysed reaction is a phosphate monoester + H2O = an alcohol + phosphate. In terms of biological role, alkaline phosphatase with broad substrate specificity. Precipitates uranium from alkaline solutions. The polypeptide is Alkaline phosphatase PhoK (Sphingomonas sp).